The primary structure comprises 591 residues: Aspartate--tRNA(Asp/Asn) ligase (591 aa).

Glu-175 contacts L-aspartate. The aspartate stretch occupies residues 199-202; the sequence is QQYK. L-aspartate is bound by residues Arg-221 and His-450. Position 221–223 (221–223) interacts with ATP; the sequence is RDE. An ATP-binding site is contributed by Glu-484. Arg-491 serves as a coordination point for L-aspartate. 536–539 lines the ATP pocket; that stretch reads GVDR.

The protein belongs to the class-II aminoacyl-tRNA synthetase family. Type 1 subfamily. Homodimer.

The protein localises to the cytoplasm. It carries out the reaction tRNA(Asx) + L-aspartate + ATP = L-aspartyl-tRNA(Asx) + AMP + diphosphate. Functionally, aspartyl-tRNA synthetase with relaxed tRNA specificity since it is able to aspartylate not only its cognate tRNA(Asp) but also tRNA(Asn). Reaction proceeds in two steps: L-aspartate is first activated by ATP to form Asp-AMP and then transferred to the acceptor end of tRNA(Asp/Asn). The protein is Aspartate--tRNA(Asp/Asn) ligase of Rhodopseudomonas palustris (strain TIE-1).